The primary structure comprises 248 residues: MYKLVLIRHGESTWNKENRFTGWVDVDLTEQGRNEAYQAGELLKEAGYTFDIAYTSVLKRAIRTLWHVQDKMDLMYLPVVHSWRLNERHYGALSGLNKAETAAKFGDDQVLVWRRSYDTPPPALEATDERAPFNDPRYAKVPREQLPLTECLKDTVARVLPLWNESIAPAVRAGKQVLIAAHGNSLRALIKYLDGISDSDIVGLNIPNGVPLVYELDENLKPIKHYYLGDQDAIAQAQAAVAKQGKAG.

Residues Arg8–Asn15, Thr21–Gly22, Arg60, Glu87–Tyr90, Lys98, Arg114–Arg115, and Gly183–Asn184 each bind substrate. His9 acts as the Tele-phosphohistidine intermediate in catalysis. Glu87 (proton donor/acceptor) is an active-site residue.

This sequence belongs to the phosphoglycerate mutase family. BPG-dependent PGAM subfamily. Homodimer.

The catalysed reaction is (2R)-2-phosphoglycerate = (2R)-3-phosphoglycerate. The protein operates within carbohydrate degradation; glycolysis; pyruvate from D-glyceraldehyde 3-phosphate: step 3/5. Functionally, catalyzes the interconversion of 2-phosphoglycerate and 3-phosphoglycerate. The sequence is that of 2,3-bisphosphoglycerate-dependent phosphoglycerate mutase from Burkholderia lata (strain ATCC 17760 / DSM 23089 / LMG 22485 / NCIMB 9086 / R18194 / 383).